The chain runs to 446 residues: Tubulin beta-6 chain (446 aa).

The short motif at Met1–Ile4 is the MREI motif element. Residues Gln11, Glu69, Ser138, Gly142, Thr143, and Gly144 each coordinate GTP. Glu69 contributes to the Mg(2+) binding site. A Phosphoserine; by CDK1 modification is found at Ser172. Residues Asn204 and Asn226 each contribute to the GTP site. Glu438 carries the post-translational modification 5-glutamyl polyglutamate.

It belongs to the tubulin family. In terms of assembly, dimer of alpha and beta chains. A typical microtubule is a hollow water-filled tube with an outer diameter of 25 nm and an inner diameter of 15 nM. Alpha-beta heterodimers associate head-to-tail to form protofilaments running lengthwise along the microtubule wall with the beta-tubulin subunit facing the microtubule plus end conferring a structural polarity. Microtubules usually have 13 protofilaments but different protofilament numbers can be found in some organisms and specialized cells. Requires Mg(2+) as cofactor. In terms of processing, some glutamate residues at the C-terminus are polyglycylated, resulting in polyglycine chains on the gamma-carboxyl group. Glycylation is mainly limited to tubulin incorporated into axonemes (cilia and flagella) whereas glutamylation is prevalent in neuronal cells, centrioles, axonemes, and the mitotic spindle. Both modifications can coexist on the same protein on adjacent residues, and lowering polyglycylation levels increases polyglutamylation, and reciprocally. Cilia and flagella glycylation is required for their stability and maintenance. Flagella glycylation controls sperm motility. Post-translationally, some glutamate residues at the C-terminus are polyglutamylated, resulting in polyglutamate chains on the gamma-carboxyl group. Polyglutamylation plays a key role in microtubule severing by spastin (SPAST). SPAST preferentially recognizes and acts on microtubules decorated with short polyglutamate tails: severing activity by SPAST increases as the number of glutamates per tubulin rises from one to eight, but decreases beyond this glutamylation threshold. Glutamylation is also involved in cilia motility. Phosphorylated on Ser-172 by CDK1 during the cell cycle, from metaphase to telophase, but not in interphase. This phosphorylation inhibits tubulin incorporation into microtubules.

Its subcellular location is the cytoplasm. The protein localises to the cytoskeleton. Its function is as follows. Tubulin is the major constituent of microtubules, a cylinder consisting of laterally associated linear protofilaments composed of alpha- and beta-tubulin heterodimers. Microtubules grow by the addition of GTP-tubulin dimers to the microtubule end, where a stabilizing cap forms. Below the cap, tubulin dimers are in GDP-bound state, owing to GTPase activity of alpha-tubulin. The chain is Tubulin beta-6 chain (TUBB6) from Bos taurus (Bovine).